The chain runs to 1069 residues: Protocadherin-7 (1069 aa).

The signal sequence occupies residues 1–28 (MLRMRTAGWARGWCLGCCLLLPLSLSLA). Cadherin domains are found at residues 29–143 (AAKQ…TPTF), 144–308 (PSPV…SPRF), 309–415 (EKSV…VPSI), 424–535 (PLKD…PPMF), 536–639 (GQSV…DPKF), 640–742 (MQDV…APTV), and 745–862 (PKNI…IPLT). At 29–879 (AAKQLLRYRL…SYEISKQRLS (851 aa)) the chain is on the extracellular side. An N-linked (GlcNAc...) asparagine glycan is attached at Asn79. Residues 182–242 (LLQEPGGGGS…GGTNPGGRSS (61 aa)) are disordered. Residues 207-221 (PGGGGNGASGGGSGG) are compositionally biased toward gly residues. N-linked (GlcNAc...) asparagine glycosylation is found at Asn689, Asn747, Asn780, Asn822, Asn840, and Asn845. Residues 880–900 (IVIGVVAGIMTVILIILIVVM) form a helical membrane-spanning segment. The Cytoplasmic segment spans residues 901-1069 (ARYCRSKNKN…RLHPYITVFG (169 aa)). The tract at residues 910-988 (NGYEAGKKDH…RYRSVNGGPG (79 aa)) is disordered. The span at 930–944 (KSKKPKKDKKNKKSK) shows a compositional bias: basic residues. Ser989 and Ser1011 each carry phosphoserine.

As to expression, expressed predominantly in brain and heart and at lower levels in various other tissues.

Its subcellular location is the cell membrane. This chain is Protocadherin-7 (PCDH7), found in Homo sapiens (Human).